The sequence spans 158 residues: PTS system fructose-specific EIIB component (158 aa).

Residues 1-98 enclose the PTS EIIB type-2 domain; it reads MKLVAVTSCP…AEAVVQKAVE (98 aa). Cysteine 9 acts as the Phosphocysteine intermediate in catalysis. A Phosphocysteine; by EIIA modification is found at cysteine 9. The disordered stretch occupies residues 104–147; sequence KTGSVTFGSGDDGEDADVGADDSSDDADAAESDEPVRRGGDPEK. The segment covering 114 to 136 has biased composition (acidic residues); the sequence is DDGEDADVGADDSSDDADAAESD. The segment covering 137-147 has biased composition (basic and acidic residues); that stretch reads EPVRRGGDPEK.

The protein resides in the cytoplasm. It carries out the reaction D-fructose(out) + N(pros)-phospho-L-histidyl-[protein] = D-fructose 1-phosphate(in) + L-histidyl-[protein]. Functionally, the phosphoenolpyruvate-dependent sugar phosphotransferase system (sugar PTS), a major carbohydrate active transport system, catalyzes the phosphorylation of incoming sugar substrates concomitantly with their translocation across the cell membrane. The enzyme II PtfABC PTS system is involved in fructose transport. The chain is PTS system fructose-specific EIIB component from Haloferax volcanii (strain ATCC 29605 / DSM 3757 / JCM 8879 / NBRC 14742 / NCIMB 2012 / VKM B-1768 / DS2) (Halobacterium volcanii).